Reading from the N-terminus, the 152-residue chain is 3-hydroxyacyl-[acyl-carrier-protein] dehydratase FabZ (152 aa).

Residue His-58 is part of the active site.

This sequence belongs to the thioester dehydratase family. FabZ subfamily.

The protein resides in the cytoplasm. It catalyses the reaction a (3R)-hydroxyacyl-[ACP] = a (2E)-enoyl-[ACP] + H2O. Its function is as follows. Involved in unsaturated fatty acids biosynthesis. Catalyzes the dehydration of short chain beta-hydroxyacyl-ACPs and long chain saturated and unsaturated beta-hydroxyacyl-ACPs. This Prochlorococcus marinus (strain MIT 9312) protein is 3-hydroxyacyl-[acyl-carrier-protein] dehydratase FabZ.